The primary structure comprises 276 residues: Pantothenate synthetase (276 aa).

27-34 (MGALHRGH) contributes to the ATP binding site. Catalysis depends on His34, which acts as the Proton donor. Gln58 contacts (R)-pantoate. Residue Gln58 coordinates beta-alanine. 147-150 (GKKD) is a binding site for ATP. Gln153 lines the (R)-pantoate pocket. ATP is bound by residues Val176 and 184–187 (LSSR).

The protein belongs to the pantothenate synthetase family. In terms of assembly, homodimer.

It localises to the cytoplasm. It carries out the reaction (R)-pantoate + beta-alanine + ATP = (R)-pantothenate + AMP + diphosphate + H(+). Its pathway is cofactor biosynthesis; (R)-pantothenate biosynthesis; (R)-pantothenate from (R)-pantoate and beta-alanine: step 1/1. Functionally, catalyzes the condensation of pantoate with beta-alanine in an ATP-dependent reaction via a pantoyl-adenylate intermediate. This chain is Pantothenate synthetase, found in Helicobacter pylori (strain G27).